The following is a 527-amino-acid chain: FAD-dependent monooxygenase CTB5 (527 aa).

Residues 78–255 form the FAD-binding PCMH-type domain; it reads SDLHPSCIAL…TAVTLKTFGQ (178 aa).

This sequence belongs to the oxygen-dependent FAD-linked oxidoreductase family.

Its pathway is mycotoxin biosynthesis. FAD-dependent monooxygenase; part of the gene cluster that mediates the biosynthesis of cercosporin, a light-activated, non-host-selective toxin. The perylenequinone chromophore of cercosporin absorbs light energy to attain an electronically-activated triplet state and produces active oxygen species such as the hydroxyl radical, superoxide, hydrogen peroxide or singlet oxygen upon reaction with oxygen molecules. These reactive oxygen species cause damage to various cellular components including lipids, proteins and nucleic acids. The first step of cercosporin biosynthesis is performed by the polyketide synthase CTB1 which catalyzes the formation of nor-toralactone. The starter unit acyltransferase (SAT) domain of CTB1 initiates polyketide extension by the selective utilization of acetyl-CoA, which is elongated to the heptaketide in the beta-ketoacyl synthase (KS) domain by successive condensations with six malonyl units introduced by the malonyl acyltransferase (MAT) domain. The product template (PT) domain catalyzes C4-C9 and C2-C11 aldol cyclizations and dehydrations to a trihydroxynaphthalene, which is thought to be delivered to the thioesterase (TE) domain for product release. The bifunctional enzyme CTB3 then methylates nor-toralactone to toralactone before conducting an unusual oxidative aromatic ring opening. The O-methyltransferase CTB2 further methylates the nascent OH-6 of the CBT3 product, blocking further oxidation at this site before the reductase CTB6 reduces the 2-oxopropyl ketone at position C7, giving naphthalene. The FAD-dependent monooxygenase CTB5 in concert with the multicopper oxidase CTB12 are responsible for homodimerization of naphthalene with CTB7 installing the dioxepine moiety, finally producing cercosporin. The fasciclin domain-containing protein CTB11 might act with CTB5 and CTB12 whereas the roles of CTB9 and CTB10 have still to be elucidated. The protein is FAD-dependent monooxygenase CTB5 of Cercospora beticola (Sugarbeet leaf spot fungus).